The following is a 99-amino-acid chain: MSDSPVKKGRGRPAKAKPEETASPKAAKKEEKKVEEVPKKIEESTKPENGAAPKKGRGRPSKGDKAAPKRPASGKGRGRPAKNAKKVDDADTEEVNSSD.

The interval Met1–Asp99 is disordered. A Phosphoserine; by CDC2 and MAPK modification is found at Ser4. The a.T hook 1 DNA-binding region spans Lys7–Glu19. Over residues Ala16–Lys46 the composition is skewed to basic and acidic residues. Ser23 bears the Phosphoserine; by MAPK mark. Residues Lys54–Ala66 constitute a DNA-binding region (a.T hook 2). Ser73 is subject to Phosphoserine; by PKC. The segment at residues Gly74–Lys86 is a DNA-binding region (a.T hook 3). The span at Ala90–Asp99 shows a compositional bias: acidic residues.

It belongs to the HMGA family. Post-translationally, phosphorylated in a cell-cycle dependent manner; substantially reduced in cells that have finished proliferating and are differentiated. Phosphorylation at Ser-4 and Ser-23 results in a 10-fold weakening of DNA-binding activity and altered the mode of protein-DNA interaction.

The protein resides in the nucleus. The protein localises to the nucleolus. It is found in the chromosome. In terms of biological role, binds preferentially to the minor groove of A+T rich regions in double-stranded DNA via the second and third DBA-binding domains. It is suggested that these proteins could function in nucleosome phasing and in the 3'-end processing of mRNA transcripts. They are also involved in the transcription regulation of genes containing, or in close proximity to A+T-rich regions. The chain is High mobility group protein I from Chironomus tentans (Midge).